Here is a 29-residue protein sequence, read N- to C-terminus: NAD(P)H-quinone oxidoreductase subunit 5, chloroplastic (29 aa).

Residues 1–15 (SGSIIHSMEANVGYS) traverse the membrane as a helical segment.

Belongs to the complex I subunit 5 family. NDH is composed of at least 16 different subunits, 5 of which are encoded in the nucleus.

The protein localises to the plastid. Its subcellular location is the chloroplast thylakoid membrane. It carries out the reaction a plastoquinone + NADH + (n+1) H(+)(in) = a plastoquinol + NAD(+) + n H(+)(out). It catalyses the reaction a plastoquinone + NADPH + (n+1) H(+)(in) = a plastoquinol + NADP(+) + n H(+)(out). In terms of biological role, NDH shuttles electrons from NAD(P)H:plastoquinone, via FMN and iron-sulfur (Fe-S) centers, to quinones in the photosynthetic chain and possibly in a chloroplast respiratory chain. The immediate electron acceptor for the enzyme in this species is believed to be plastoquinone. Couples the redox reaction to proton translocation, and thus conserves the redox energy in a proton gradient. The chain is NAD(P)H-quinone oxidoreductase subunit 5, chloroplastic from Pseudotsuga menziesii (Douglas-fir).